Consider the following 477-residue polypeptide: Proton extrusion protein PxcA (477 aa).

3 consecutive transmembrane segments (helical) span residues 239-259, 354-374, and 437-457; these read FILL…ITFV, GIKN…IIST, and FNFL…KYWI.

The protein belongs to the CemA family.

It is found in the cell inner membrane. Functionally, required for H(+) efflux immediately after light irradiation to form a rapid H(+) concentration gradient across the thylakoid membranes. Together with PxcL, contributes to transient H(+) uptake following dark to light transition. The polypeptide is Proton extrusion protein PxcA (Trichodesmium erythraeum (strain IMS101)).